The following is a 174-amino-acid chain: Large ribosomal subunit protein uL10 (174 aa).

It belongs to the universal ribosomal protein uL10 family. In terms of assembly, part of the ribosomal stalk of the 50S ribosomal subunit. The N-terminus interacts with L11 and the large rRNA to form the base of the stalk. The C-terminus forms an elongated spine to which L12 dimers bind in a sequential fashion forming a multimeric L10(L12)X complex.

Its function is as follows. Forms part of the ribosomal stalk, playing a central role in the interaction of the ribosome with GTP-bound translation factors. The sequence is that of Large ribosomal subunit protein uL10 from Coxiella burnetii (strain CbuK_Q154) (Coxiella burnetii (strain Q154)).